Consider the following 385-residue polypeptide: Prepilin peptidase EppA (385 aa).

10 consecutive transmembrane segments (helical) span residues 1-21 (MILM…CFYA), 29-49 (GIIP…LNGA), 58-78 (WIFI…YILW), 80-100 (MVAW…LLPF), 104-124 (LVSY…PFPL), 126-146 (VIIN…FFII), 166-186 (TSMV…LITD), 187-207 (FLPF…TMVI), 231-251 (FELT…IQLI), and 358-378 (PAIF…MILF).

It belongs to the peptidase A24 family.

Its subcellular location is the cell membrane. Peptidase that processes the N-terminus of prepilins. The protein is Prepilin peptidase EppA of Methanothermobacter thermautotrophicus (strain ATCC 29096 / DSM 1053 / JCM 10044 / NBRC 100330 / Delta H) (Methanobacterium thermoautotrophicum).